Reading from the N-terminus, the 294-residue chain is Acetylglutamate kinase (294 aa).

Substrate-binding positions include 63 to 64 (GG), R85, and N188.

It belongs to the acetylglutamate kinase family. ArgB subfamily.

Its subcellular location is the cytoplasm. It carries out the reaction N-acetyl-L-glutamate + ATP = N-acetyl-L-glutamyl 5-phosphate + ADP. Its pathway is amino-acid biosynthesis; L-arginine biosynthesis; N(2)-acetyl-L-ornithine from L-glutamate: step 2/4. Catalyzes the ATP-dependent phosphorylation of N-acetyl-L-glutamate. The polypeptide is Acetylglutamate kinase (Methanococcus maripaludis (strain C6 / ATCC BAA-1332)).